Here is a 920-residue protein sequence, read N- to C-terminus: Phosphoenolpyruvate carboxylase (920 aa).

Residues histidine 138 and lysine 583 contribute to the active site.

The protein belongs to the PEPCase type 1 family. Mg(2+) serves as cofactor.

It catalyses the reaction oxaloacetate + phosphate = phosphoenolpyruvate + hydrogencarbonate. In terms of biological role, forms oxaloacetate, a four-carbon dicarboxylic acid source for the tricarboxylic acid cycle. The sequence is that of Phosphoenolpyruvate carboxylase from Streptococcus pyogenes serotype M3 (strain ATCC BAA-595 / MGAS315).